We begin with the raw amino-acid sequence, 160 residues long: MAVLKKPDLSDPKLRAKLAKGMGHNYYGEPAWPNDLLYVFPVVIMGTIGLVVGLAVLDPGMIGEPADPFATPLEILPEWYLYPVFQILRILPNKLLGIACQAAIPLGLMLIPFIESVNKFQNPFRRPVATTFFMIGTLVTLWLGAGAIFPIDKSLTLGLF.

Transmembrane regions (helical) follow at residues 36-56 (LLYV…GLAV), 95-115 (LLGI…PFIE), and 131-151 (TFFM…IFPI).

It belongs to the cytochrome b family. PetD subfamily. The 4 large subunits of the cytochrome b6-f complex are cytochrome b6, subunit IV (17 kDa polypeptide, PetD), cytochrome f and the Rieske protein, while the 4 small subunits are PetG, PetL, PetM and PetN. The complex functions as a dimer.

The protein resides in the cellular thylakoid membrane. Its function is as follows. Component of the cytochrome b6-f complex, which mediates electron transfer between photosystem II (PSII) and photosystem I (PSI), cyclic electron flow around PSI, and state transitions. This Gloeothece citriformis (strain PCC 7424) (Cyanothece sp. (strain PCC 7424)) protein is Cytochrome b6-f complex subunit 4.